The chain runs to 169 residues: UPF0303 protein BOV_1367 (169 aa).

Belongs to the UPF0303 family.

This Brucella ovis (strain ATCC 25840 / 63/290 / NCTC 10512) protein is UPF0303 protein BOV_1367.